A 109-amino-acid polypeptide reads, in one-letter code: Cell division protein FtsL (109 aa).

Residues 1-3 (MSR) are Cytoplasmic-facing. The helical transmembrane segment at 4-21 (LNIFLLIIVMGCALSVVN) threads the bilayer. Topologically, residues 22–109 (STNQQRQIFI…ASAAPTGGAR (88 aa)) are periplasmic.

The protein belongs to the FtsL family. As to quaternary structure, part of a complex composed of FtsB, FtsL and FtsQ.

The protein resides in the cell inner membrane. In terms of biological role, essential cell division protein. May link together the upstream cell division proteins, which are predominantly cytoplasmic, with the downstream cell division proteins, which are predominantly periplasmic. In Burkholderia pseudomallei (strain K96243), this protein is Cell division protein FtsL.